A 67-amino-acid chain; its full sequence is Probable Sec-independent protein translocase protein TatE (67 aa).

The helical transmembrane segment at 4 to 21 threads the bilayer; that stretch reads ISITKLLVVAALIVLVFG. The segment at 43–67 is disordered; sequence MNDDDTSVKKSAEEDVPADKISHKE.

This sequence belongs to the TatA/E family. TatE subfamily.

It is found in the cell inner membrane. Its function is as follows. Part of the twin-arginine translocation (Tat) system that transports large folded proteins containing a characteristic twin-arginine motif in their signal peptide across membranes. TatE shares overlapping functions with TatA. This Enterobacter lignolyticus (strain SCF1) protein is Probable Sec-independent protein translocase protein TatE.